The sequence spans 61 residues: Short neurotoxin 2 (61 aa).

Intrachain disulfides connect C3–C23, C17–C40, C42–C53, and C54–C59.

The protein belongs to the three-finger toxin family. Short-chain subfamily. Type I alpha-neurotoxin sub-subfamily. Expressed by the venom gland.

It localises to the secreted. Binds to muscle nicotinic acetylcholine receptor (nAChR) and inhibit acetylcholine from binding to the receptor, thereby impairing neuromuscular transmission. The protein is Short neurotoxin 2 of Naja annulifera (Banded Egyptian cobra).